The chain runs to 743 residues: Protein will decrease acetylation (743 aa).

WD repeat units lie at residues glutamate 389–lysine 428, leucine 493–tryptophan 524, tyrosine 535–isoleucine 576, tyrosine 577–valine 618, phenylalanine 619–glutamate 660, and leucine 661–aspartate 702.

The protein belongs to the WD repeat TAF5 family. As to quaternary structure, component of the Spt-Ada-Gcn5 acetyltransferase (SAGA) complex consisting of wda/Taf5L, Saf6, Taf9, Taf10b, Taf12, Ada1, Spt3, Spt7, Spt20, Sf3b3, Sf3b5, Nipped-A/Tra1, a histone acetyltransferase (HAT) module made up of Gcn5, Ada2b (Isoform B), Ada3 and Sgf29, and a deubiquitinase (DUB) module made up of not/nonstop, Sgf11 and e(y)2 tethered to SAGA by Atxn7. Not essential for the assembly or integrity of the SAGA complex. Not a component of the Ada2a-containing ATAC complex.

It is found in the nucleus. The protein localises to the chromosome. Its function is as follows. Component of the transcription regulatory complex SAGA, a multiprotein complex that activates transcription by remodeling chromatin and mediating histone acetylation and deubiquitination. The SAGA complex predominantly acetylates histone H3. Involved in acetylation of histone H3 on 'Lys-10' (H3K9ac) by the SAGA complex in the larval central nervous system. Involved in SAGA complex coactivator functions. Required for oogenesis. This is Protein will decrease acetylation from Drosophila melanogaster (Fruit fly).